A 264-amino-acid chain; its full sequence is ATP synthase subunit a (264 aa).

Transmembrane regions (helical) follow at residues 29–49, 90–110, 111–131, 134–154, 177–197, 208–228, and 235–255; these read TWHIDSLLFSVGLGVLFLWIF, IAPLALTIFVWVFMMNFMDMI, PVDWLPSLALLAGVEYLKVVP, DVNITFSLAIGVFVLIIYYSI, IPVNLLLESVTLIAKPISLAL, LIFILIALMYSANWAMATLGV, and LIFHILVITLQAFIFMMLTIV.

It belongs to the ATPase A chain family. F-type ATPases have 2 components, CF(1) - the catalytic core - and CF(0) - the membrane proton channel. CF(1) has five subunits: alpha(3), beta(3), gamma(1), delta(1), epsilon(1). CF(0) has three main subunits: a(1), b(2) and c(9-12). The alpha and beta chains form an alternating ring which encloses part of the gamma chain. CF(1) is attached to CF(0) by a central stalk formed by the gamma and epsilon chains, while a peripheral stalk is formed by the delta and b chains.

The protein localises to the cell inner membrane. Key component of the proton channel; it plays a direct role in the translocation of protons across the membrane. The chain is ATP synthase subunit a from Shewanella denitrificans (strain OS217 / ATCC BAA-1090 / DSM 15013).